A 410-amino-acid chain; its full sequence is Peptidase T (410 aa).

Histidine 79 lines the Zn(2+) pocket. Residue aspartate 81 is part of the active site. Aspartate 142 lines the Zn(2+) pocket. Glutamate 176 acts as the Proton acceptor in catalysis. Zn(2+) contacts are provided by glutamate 177, aspartate 199, and histidine 381.

Belongs to the peptidase M20B family. Zn(2+) serves as cofactor.

Its subcellular location is the cytoplasm. The enzyme catalyses Release of the N-terminal residue from a tripeptide.. Cleaves the N-terminal amino acid of tripeptides. This Bacillus anthracis (strain A0248) protein is Peptidase T.